Here is a 395-residue protein sequence, read N- to C-terminus: Zinc finger protein HD1 (395 aa).

A B box-type 1; atypical zinc finger spans residues 30-72; that stretch reads PWARPCDGCRAAPSVVYCRADAAYLCASCDARVHAANRVASRH. Zn(2+) is bound by residues cysteine 35, cysteine 38, cysteine 58, histidine 63, cysteine 78, cysteine 81, cysteine 101, and histidine 106. A B box-type 2; atypical zinc finger spans residues 73 to 117; that stretch reads ERVRVCEACERAPAALACRADAAALCVACDVQVHSANPLPAITIP. Disordered stretches follow at residues 147–176 and 208–228; these read SKDS…SNNG and GMHE…EFAE. The span at 152–175 shows a compositional bias: low complexity; that stretch reads NNNNNNNNNDNDNNDNNNSNSSNN. The CCT domain occupies 326 to 368; it reads REARVLRYREKKKARKFEKTIRYETRKAYAEARPRIKGRFAKR.

This sequence belongs to the CONSTANS family. Interacts with HAL3 in the dark. Phosphorylated by OSK4 in the presence of HDR1.

It localises to the nucleus. Its function is as follows. Probable transcription factor involved in the regulation of flower development. Required for the promotion of flowering under short day (SD) conditions and the suppression of flowering under long day (LD) conditions. Positively regulates the floral activator HEADING DATE 3a (HD3A) under SD and negatively under LD conditions. The chain is Zinc finger protein HD1 from Oryza sativa subsp. japonica (Rice).